The sequence spans 815 residues: MGSNLPSQPNLRLTIIAADGLYKRDVFRFPDPFAVATVGGEQTQTTSVIKKTLNPYWNEMFDLRVNEESILAIQIFDQKKFKKKDQGFLGVINVRIGDVIDLEMGGDEMLTRDLKKSNDNLVVHGKLIINLSTNLSTPNTNQANGLHRSHIQPSTSSGLVPQVGASAAHPAASPAPIDPAASNPSLHPQRVPSTNRPPSTVAPGAAAGATPTNTQGSRTNLSSFEDSQGRLPAGWERREDNLGRTYYVDHNTRTTTWTRPSSNYNEQTQRTQREANMQLERRAHQSRMLPEDRTGANSPNLPETSQQAPTPPAGGSANAVSMMATGATTAGTGELPPGWEQRTTPEGRPYFVDHNTRTTTWVDPRRQQYIRMYGQNANGTNTTIQQQPVSQLGPLPSGWEMRLTNTARVYFVDHNTKTTTWDDPRLPSSLDQGVPQYKRDFRRKLIYFRSQPALRIMSGQCHVKVRRNNIFEDSYAEIMRQSASDLKKRLMIKFDGEDGLDYGGLSREFFFLLSHEMFNPFYCLFEYSAHDNYTLQINPHSGVNPEHLNYFKFIGRVVGLAIFHRRFLDSFFIGAFYKMMLRKKVSLQDMEGVDEDLHRNLTWTLDNDIEGVLELTFAVDDEKFGERRTIDLKPGGRDIPVTNENKGEYVELVTEWKIVKRVEEQFNAFMSGFNELIPADLVNVFDERELELLIGGIADIDVDDWKKHTDYRGYQESDDVIQNFWKVVRTWDAEQKSRLLQFTTGTSRIPVNGFKDLQGSDGPRRFTIEKSGDPVALPKSHTCFNRLDLPPYKTYETLEHKMSIAVEETLGFGQE.

Residues 1 to 112 (MGSNLPSQPN…EMGGDEMLTR (112 aa)) form the C2 domain. Disordered stretches follow at residues 134-237 (NLST…GWER) and 253-353 (RTTT…YFVD). Low complexity-rich tracts occupy residues 165-185 (ASAA…SNPS) and 202-212 (APGAAAGATPT). 2 stretches are compositionally biased toward polar residues: residues 213 to 226 (NTQG…SFED) and 253 to 270 (RTTT…QTQR). The WW 1 domain maps to 229–262 (GRLPAGWERREDNLGRTYYVDHNTRTTTWTRPSS). Residues 279–294 (LERRAHQSRMLPEDRT) are compositionally biased toward basic and acidic residues. Residues 295-308 (GANSPNLPETSQQA) are compositionally biased toward polar residues. The segment covering 324–333 (ATGATTAGTG) has biased composition (low complexity). WW domains lie at 333 to 366 (GELP…DPRR) and 393 to 426 (GPLP…DPRL). The region spanning 482–815 (SASDLKKRLM…VEETLGFGQE (334 aa)) is the HECT domain. C783 serves as the catalytic Glycyl thioester intermediate.

This sequence belongs to the RSP5/NEDD4 family. Interacts with creD.

The protein localises to the cytoplasm. It carries out the reaction S-ubiquitinyl-[E2 ubiquitin-conjugating enzyme]-L-cysteine + [acceptor protein]-L-lysine = [E2 ubiquitin-conjugating enzyme]-L-cysteine + N(6)-ubiquitinyl-[acceptor protein]-L-lysine.. The protein operates within protein modification; protein ubiquitination. E3 ubiquitin-protein ligase which accepts ubiquitin from an E2 ubiquitin-conjugating enzyme in the form of a thioester and then directly transfers the ubiquitin to targeted substrates. Probably involved in the regulatory network controlling carbon source utilization. The sequence is that of Probable E3 ubiquitin-protein ligase hulA (hulA) from Aspergillus clavatus (strain ATCC 1007 / CBS 513.65 / DSM 816 / NCTC 3887 / NRRL 1 / QM 1276 / 107).